Consider the following 629-residue polypeptide: tRNA uridine 5-carboxymethylaminomethyl modification enzyme MnmG (629 aa).

13 to 18 (GGGHAG) contacts FAD. Position 273 to 287 (273 to 287 (GPRYCPSIEDKITRF)) interacts with NAD(+).

It belongs to the MnmG family. As to quaternary structure, homodimer. Heterotetramer of two MnmE and two MnmG subunits. It depends on FAD as a cofactor.

It is found in the cytoplasm. NAD-binding protein involved in the addition of a carboxymethylaminomethyl (cmnm) group at the wobble position (U34) of certain tRNAs, forming tRNA-cmnm(5)s(2)U34. The protein is tRNA uridine 5-carboxymethylaminomethyl modification enzyme MnmG of Aeromonas salmonicida (strain A449).